A 506-amino-acid chain; its full sequence is Galactose/methyl galactoside import ATP-binding protein MglA (506 aa).

ABC transporter domains lie at 14-249 and 264-506; these read LEMS…VGRS and VILE…SLHL. 46–53 contacts ATP; sequence GENGAGKS.

This sequence belongs to the ABC transporter superfamily. Galactose/methyl galactoside importer (TC 3.A.1.2.3) family. As to quaternary structure, the complex is composed of one ATP-binding protein (MglA), two transmembrane proteins (MglC) and a solute-binding protein (MglB).

It is found in the cell inner membrane. The catalysed reaction is D-galactose(out) + ATP + H2O = D-galactose(in) + ADP + phosphate + H(+). The enzyme catalyses methyl beta-D-galactoside(out) + ATP + H2O = methyl beta-D-galactoside(in) + ADP + phosphate + H(+). Functionally, part of the ABC transporter complex MglABC involved in galactose/methyl galactoside import. Responsible for energy coupling to the transport system. The protein is Galactose/methyl galactoside import ATP-binding protein MglA of Escherichia coli O6:K15:H31 (strain 536 / UPEC).